The chain runs to 699 residues: Ubiquitin-like modifier-activating enzyme atg7 (699 aa).

The GXGXXG motif motif lies at 370 to 375; sequence GAGTLG. Cys550 serves as the catalytic Glycyl thioester intermediate. The disordered stretch occupies residues 680–699; it reads MQWSEDEEGMDEEEGEGELI. Residues 682-699 are compositionally biased toward acidic residues; it reads WSEDEEGMDEEEGEGELI.

It belongs to the ATG7 family. Homodimer.

It is found in the cytoplasm. The protein localises to the preautophagosomal structure. E1-like activating enzyme involved in the 2 ubiquitin-like systems required for cytoplasm to vacuole transport (Cvt) and autophagy. Activates atg12 for its conjugation with apg-4/atg5 and apg-6/atg8 for its conjugation with phosphatidylethanolamine. Both systems are needed for the apg-6/atg8 association to Cvt vesicles and autophagosomes membranes. Autophagy is essential for maintenance of amino acid levels and protein synthesis under nitrogen starvation. Required for selective autophagic degradation of the nucleus (nucleophagy) as well as for mitophagy which contributes to regulate mitochondrial quantity and quality by eliminating the mitochondria to a basal level to fulfill cellular energy requirements and preventing excess ROS production. Plays a role in the regulation of filamentous growth and chronological longevity. The sequence is that of Ubiquitin-like modifier-activating enzyme atg7 (apg-5) from Neurospora crassa (strain ATCC 24698 / 74-OR23-1A / CBS 708.71 / DSM 1257 / FGSC 987).